A 487-amino-acid polypeptide reads, in one-letter code: N-succinylglutamate 5-semialdehyde dehydrogenase (487 aa).

Residue 221–226 (GSSDTG) coordinates NAD(+). Residues Glu244 and Cys278 contribute to the active site.

It belongs to the aldehyde dehydrogenase family. AstD subfamily.

It catalyses the reaction N-succinyl-L-glutamate 5-semialdehyde + NAD(+) + H2O = N-succinyl-L-glutamate + NADH + 2 H(+). Its pathway is amino-acid degradation; L-arginine degradation via AST pathway; L-glutamate and succinate from L-arginine: step 4/5. Catalyzes the NAD-dependent reduction of succinylglutamate semialdehyde into succinylglutamate. The sequence is that of N-succinylglutamate 5-semialdehyde dehydrogenase from Burkholderia cenocepacia (strain ATCC BAA-245 / DSM 16553 / LMG 16656 / NCTC 13227 / J2315 / CF5610) (Burkholderia cepacia (strain J2315)).